The primary structure comprises 352 residues: Photosystem II protein D1 (352 aa).

Residue T2 is modified to N-acetylthreonine. At T2 the chain carries Phosphothreonine. Helical transmembrane passes span 29-46 (YIGW…TATS), 118-133 (HFFL…EWEL), and 142-156 (WIAV…AATA). Residue H118 participates in chlorophyll a binding. Y126 serves as a coordination point for pheophytin a. [CaMn4O5] cluster is bound by residues D170 and E189. A helical membrane pass occupies residues 197–218 (FHMLGVAGVFGGSLFSAMHGSL). A chlorophyll a-binding site is contributed by H198. A quinone-binding positions include H215 and 264 to 265 (SF). H215 serves as a coordination point for Fe cation. Position 272 (H272) interacts with Fe cation. The helical transmembrane segment at 274 to 288 (FLAAWPVVGIWFTAL) threads the bilayer. The [CaMn4O5] cluster site is built by H332, E333, D342, and A344. Positions 345 to 352 (SVEAPSIA) are excised as a propeptide.

Belongs to the reaction center PufL/M/PsbA/D family. In terms of assembly, PSII is composed of 1 copy each of membrane proteins PsbA, PsbB, PsbC, PsbD, PsbE, PsbF, PsbH, PsbI, PsbJ, PsbK, PsbL, PsbM, PsbT, PsbX, PsbY, PsbZ, Psb30/Ycf12, at least 3 peripheral proteins of the oxygen-evolving complex and a large number of cofactors. It forms dimeric complexes. Requires The D1/D2 heterodimer binds P680, chlorophylls that are the primary electron donor of PSII, and subsequent electron acceptors. It shares a non-heme iron and each subunit binds pheophytin, quinone, additional chlorophylls, carotenoids and lipids. D1 provides most of the ligands for the Mn4-Ca-O5 cluster of the oxygen-evolving complex (OEC). There is also a Cl(-1) ion associated with D1 and D2, which is required for oxygen evolution. The PSII complex binds additional chlorophylls, carotenoids and specific lipids. as cofactor. Tyr-161 forms a radical intermediate that is referred to as redox-active TyrZ, YZ or Y-Z. Post-translationally, C-terminally processed by CTPA; processing is essential to allow assembly of the oxygen-evolving complex and thus photosynthetic growth.

Its subcellular location is the plastid. The protein localises to the chloroplast thylakoid membrane. The enzyme catalyses 2 a plastoquinone + 4 hnu + 2 H2O = 2 a plastoquinol + O2. Its function is as follows. Photosystem II (PSII) is a light-driven water:plastoquinone oxidoreductase that uses light energy to abstract electrons from H(2)O, generating O(2) and a proton gradient subsequently used for ATP formation. It consists of a core antenna complex that captures photons, and an electron transfer chain that converts photonic excitation into a charge separation. The D1/D2 (PsbA/PsbD) reaction center heterodimer binds P680, the primary electron donor of PSII as well as several subsequent electron acceptors. This is Photosystem II protein D1 from Chlorella ellipsoidea.